We begin with the raw amino-acid sequence, 428 residues long: Histidine--tRNA ligase (428 aa).

The protein belongs to the class-II aminoacyl-tRNA synthetase family. In terms of assembly, homodimer.

Its subcellular location is the cytoplasm. It carries out the reaction tRNA(His) + L-histidine + ATP = L-histidyl-tRNA(His) + AMP + diphosphate + H(+). The protein is Histidine--tRNA ligase of Ectopseudomonas mendocina (strain ymp) (Pseudomonas mendocina).